A 571-amino-acid chain; its full sequence is Phosphoribosylaminoimidazole carboxylase (571 aa).

Serine 37 is subject to Phosphoserine. The ATP-grasp domain maps to 110–298; the sequence is KEHLIKNGIA…QFEAHLRSIL (189 aa). Position 138 to 193 (138 to 193) interacts with ATP; sequence GRDLGFPFVLKSRTLAYDGRGNFVVKNKEMIPEALEVLKDRPLYAEKWAPFTKELA.

The protein in the C-terminal section; belongs to the AIR carboxylase family. Class I subfamily.

The catalysed reaction is 5-amino-1-(5-phospho-D-ribosyl)imidazole-4-carboxylate + H(+) = 5-amino-1-(5-phospho-beta-D-ribosyl)imidazole + CO2. Its pathway is purine metabolism; IMP biosynthesis via de novo pathway; 5-amino-1-(5-phospho-D-ribosyl)imidazole-4-carboxylate from 5-amino-1-(5-phospho-D-ribosyl)imidazole (carboxylase route): step 1/1. This chain is Phosphoribosylaminoimidazole carboxylase (ADE2), found in Saccharomyces cerevisiae (strain ATCC 204508 / S288c) (Baker's yeast).